Consider the following 545-residue polypeptide: CTP synthase (545 aa).

Residues 1–266 (MTTRYIFVTG…DDLVVKRFGL (266 aa)) form an amidoligase domain region. Position 14 (S14) interacts with CTP. S14 is a UTP binding site. ATP is bound by residues 15-20 (SLGKGI) and D72. The Mg(2+) site is built by D72 and E140. Residues 147 to 149 (DIE), 187 to 192 (KTKPTQ), and K223 each bind CTP. UTP is bound by residues 187 to 192 (KTKPTQ) and K223. An ATP-binding site is contributed by 239–241 (KDV). The Glutamine amidotransferase type-1 domain occupies 291–542 (VIGMVGKYIE…IAAASAHQKR (252 aa)). Residue G352 coordinates L-glutamine. Catalysis depends on C379, which acts as the Nucleophile; for glutamine hydrolysis. L-glutamine is bound by residues 380-383 (LGMQ), E403, and R470. Active-site residues include H515 and E517.

It belongs to the CTP synthase family. As to quaternary structure, homotetramer.

The enzyme catalyses UTP + L-glutamine + ATP + H2O = CTP + L-glutamate + ADP + phosphate + 2 H(+). It carries out the reaction L-glutamine + H2O = L-glutamate + NH4(+). The catalysed reaction is UTP + NH4(+) + ATP = CTP + ADP + phosphate + 2 H(+). The protein operates within pyrimidine metabolism; CTP biosynthesis via de novo pathway; CTP from UDP: step 2/2. Allosterically activated by GTP, when glutamine is the substrate; GTP has no effect on the reaction when ammonia is the substrate. The allosteric effector GTP functions by stabilizing the protein conformation that binds the tetrahedral intermediate(s) formed during glutamine hydrolysis. Inhibited by the product CTP, via allosteric rather than competitive inhibition. Catalyzes the ATP-dependent amination of UTP to CTP with either L-glutamine or ammonia as the source of nitrogen. Regulates intracellular CTP levels through interactions with the four ribonucleotide triphosphates. This chain is CTP synthase, found in Shewanella baltica (strain OS223).